Reading from the N-terminus, the 201-residue chain is uncharacterized protein (201 aa).

A helical transmembrane segment spans residues 11 to 31 (IIILTIMILTIIIFTRTINGL).

The protein localises to the membrane. This is an uncharacterized protein from Acanthamoeba polyphaga mimivirus (APMV).